The primary structure comprises 338 residues: 1-aminocyclopropane-1-carboxylate deaminase (338 aa).

Lysine 51 bears the N6-(pyridoxal phosphate)lysine mark. The active-site Nucleophile is the serine 78.

The protein belongs to the ACC deaminase/D-cysteine desulfhydrase family. Homotrimer. The cofactor is pyridoxal 5'-phosphate.

It carries out the reaction 1-aminocyclopropane-1-carboxylate + H2O = 2-oxobutanoate + NH4(+). Catalyzes a cyclopropane ring-opening reaction, the irreversible conversion of 1-aminocyclopropane-1-carboxylate (ACC) to ammonia and alpha-ketobutyrate. Allows growth on ACC as a nitrogen source. This chain is 1-aminocyclopropane-1-carboxylate deaminase, found in Burkholderia orbicola (strain MC0-3).